The primary structure comprises 154 residues: Large ribosomal subunit protein uL13 (154 aa).

This sequence belongs to the universal ribosomal protein uL13 family. As to quaternary structure, part of the 50S ribosomal subunit.

In terms of biological role, this protein is one of the early assembly proteins of the 50S ribosomal subunit, although it is not seen to bind rRNA by itself. It is important during the early stages of 50S assembly. This Rhizobium etli (strain ATCC 51251 / DSM 11541 / JCM 21823 / NBRC 15573 / CFN 42) protein is Large ribosomal subunit protein uL13.